A 220-amino-acid polypeptide reads, in one-letter code: NADH-quinone oxidoreductase subunit I (220 aa).

2 4Fe-4S ferredoxin-type domains span residues 71–102 and 112–141; these read LQRL…IITH and DSYT…MGNR. Residues Cys82, Cys85, Cys88, Cys92, Cys121, Cys124, Cys127, and Cys131 each contribute to the [4Fe-4S] cluster site. Positions 187–220 are disordered; that stretch reads MQATPLDYVQEPSKEESKEETPTNPESNKGDENV. A compositionally biased stretch (basic and acidic residues) spans 198-207; sequence PSKEESKEET.

The protein belongs to the complex I 23 kDa subunit family. As to quaternary structure, NDH-1 is composed of 14 different subunits. Subunits NuoA, H, J, K, L, M, N constitute the membrane sector of the complex. [4Fe-4S] cluster is required as a cofactor.

It is found in the cell inner membrane. The catalysed reaction is a quinone + NADH + 5 H(+)(in) = a quinol + NAD(+) + 4 H(+)(out). NDH-1 shuttles electrons from NADH, via FMN and iron-sulfur (Fe-S) centers, to quinones in the respiratory chain. The immediate electron acceptor for the enzyme in this species is believed to be ubiquinone. Couples the redox reaction to proton translocation (for every two electrons transferred, four hydrogen ions are translocated across the cytoplasmic membrane), and thus conserves the redox energy in a proton gradient. The polypeptide is NADH-quinone oxidoreductase subunit I (Helicobacter pylori (strain Shi470)).